Reading from the N-terminus, the 1488-residue chain is Indigoidine synthase (1488 aa).

The tract at residues 229–585 (KNRAQRHPEQ…GGDGVARGYL (357 aa)) is adenylation. Residues 1137–1212 (APRNPLEHQV…KLAAWLSRAR (76 aa)) form the Carrier domain. S1172 is subject to O-(pantetheine 4'-phosphoryl)serine. A thioesterase region spans residues 1230–1346 (PIYCWPGLGG…ERVAAMNRKA (117 aa)).

Belongs to the ATP-dependent AMP-binding enzyme family. Requires pantetheine 4'-phosphate as cofactor.

It carries out the reaction 2 FMN + 2 L-glutamine + 2 ATP + O2 = indigoidine + 2 FMNH2 + 2 AMP + 2 diphosphate + 2 H2O. It catalyses the reaction FMN + L-glutamine + ATP = 3-amino-1,5-dihydropyridine-2,6-dione + FMNH2 + AMP + diphosphate. The enzyme catalyses 2 3-amino-1,5-dihydropyridine-2,6-dione + O2 = indigoidine + 2 H2O. Its pathway is pigment biosynthesis. In terms of biological role, nonribosomal peptide synthetase involved in the biosynthesis of the blue pigment indigoidine, which is implicated in pathogenicity and protection from oxidative stress. Catalyzes the synthesis of the blue pigment using L-Gln as a substrate. Two glutamine molecules are cyclized and oxidized to form indigoidine. The protein is Indigoidine synthase of Dickeya dadantii (strain 3937) (Erwinia chrysanthemi (strain 3937)).